We begin with the raw amino-acid sequence, 237 residues long: Coat protein (237 aa).

The disordered stretch occupies residues 1–24; the sequence is MSAPASTTQATGSTTSTTTKTAGA.

The protein belongs to the potexvirus capsid protein family.

The protein resides in the virion. In terms of biological role, required for genome encapsidation. Forms ribonucleoprotein complexes along with TGB1 helicase and viral RNA. This Brassica campestris (Field mustard) protein is Coat protein.